The primary structure comprises 525 residues: Putative EGF-like domain-containing protein R659 (525 aa).

A signal peptide spans 1–24 (MGNKWCGIFLTILLLAQMSQTIFG). Asparagine 60, asparagine 77, asparagine 171, asparagine 181, asparagine 268, and asparagine 281 each carry an N-linked (GlcNAc...) asparagine; by host glycan. An EGF-like domain is found at 317–359 (LTQGCGNCDSNAECVFVSGSNSIVPKYQCKCKSGYVGNGTHCS). 3 disulfides stabilise this stretch: cysteine 321-cysteine 330, cysteine 324-cysteine 345, and cysteine 347-cysteine 358. Asparagine 354 and asparagine 411 each carry an N-linked (GlcNAc...) asparagine; by host glycan.

It localises to the secreted. This Acanthamoeba polyphaga (Amoeba) protein is Putative EGF-like domain-containing protein R659.